The sequence spans 375 residues: Chaperone protein DnaJ (375 aa).

Residues 5 to 69 (DYYEVLGVSK…QKRAQYDQFG (65 aa)) enclose the J domain. The CR-type zinc finger occupies 132-214 (GKETIIEIPR…CGGTGKVKKR (83 aa)). Zn(2+) is bound by residues C145, C148, C162, C165, C188, C191, C202, and C205. CXXCXGXG motif repeat units follow at residues 145–152 (CETCKGSG), 162–169 (CSHCGGSG), 188–195 (CHHCEGTG), and 202–209 (CSDCGGTG).

It belongs to the DnaJ family. In terms of assembly, homodimer. It depends on Zn(2+) as a cofactor.

The protein resides in the cytoplasm. Functionally, participates actively in the response to hyperosmotic and heat shock by preventing the aggregation of stress-denatured proteins and by disaggregating proteins, also in an autonomous, DnaK-independent fashion. Unfolded proteins bind initially to DnaJ; upon interaction with the DnaJ-bound protein, DnaK hydrolyzes its bound ATP, resulting in the formation of a stable complex. GrpE releases ADP from DnaK; ATP binding to DnaK triggers the release of the substrate protein, thus completing the reaction cycle. Several rounds of ATP-dependent interactions between DnaJ, DnaK and GrpE are required for fully efficient folding. Also involved, together with DnaK and GrpE, in the DNA replication of plasmids through activation of initiation proteins. This is Chaperone protein DnaJ from Bacillus velezensis (strain DSM 23117 / BGSC 10A6 / LMG 26770 / FZB42) (Bacillus amyloliquefaciens subsp. plantarum).